A 126-amino-acid polypeptide reads, in one-letter code: MFYLSDIEEEASAGAEPTYNFWEVLLFSNTQENLVTVVGELHTLTDRVVHYKIEPESREVTATTLPSLLALLLEKRNQARRLYRDVLSMKMSELDWDIDDLFTQLQEELTRTDDTLSMYPRRRFYH.

As to quaternary structure, g proteins are composed of 3 units, alpha, beta and gamma. GPG1 interacts with the beta subunits GBP1 and GPB2.

Its subcellular location is the cytoplasm. In terms of biological role, gamma subunit of a guanine nucleotide-binding protein (G protein). G proteins are involved as modulators or transducers in various transmembrane signaling systems. The beta and gamma chains are required for the GTPase activity, for replacement of GDP by GTP, and for G protein-effector interaction. Involved in the determination of the cAMP level according to nutritional conditions, most probably as a regulator of cAMP phosphodiesterase. Required for the control of pseudohyphal and haploid invasive growth. The polypeptide is Heterotrimeric G protein gamma subunit GPG1 (GPG1) (Saccharomyces cerevisiae (strain ATCC 204508 / S288c) (Baker's yeast)).